A 215-amino-acid chain; its full sequence is MLPYKTLLLALGFFFTVQCHFFASASSFDIADNNQNGVRLLRSPEKTDEERGAVDALKSELSFMKLNWAARSKITPKEKLVAKQAKEMSNTKEKLSKIEAKLQAKAVKAEQKVKDQAIKAEQNLKAKNEKAAQQLKALQQNELEKLAKQAAKDDKMYNRWLMAEMTPDDVYKKFKFKELAKKGIYPTTSVNYKHYKNYRTIYYARYPKLLEKLDA.

The first 19 residues, methionine 1–cysteine 19, serve as a signal peptide directing secretion. Residues arginine 39–arginine 51 carry the RxLR-dEER motif. Residues valine 81–glutamine 149 adopt a coiled-coil conformation.

This sequence belongs to the RxLR effector family.

It is found in the secreted. The protein localises to the host cell membrane. Functionally, effector that might be involved in host plant infection. The protein is RxLR effector protein PITG_00582 of Phytophthora infestans (strain T30-4) (Potato late blight agent).